Reading from the N-terminus, the 163-residue chain is Putative pre-16S rRNA nuclease (163 aa).

Belongs to the YqgF nuclease family.

It is found in the cytoplasm. Could be a nuclease involved in processing of the 5'-end of pre-16S rRNA. The protein is Putative pre-16S rRNA nuclease of Rhodopseudomonas palustris (strain BisA53).